Consider the following 1270-residue polypeptide: DNA-directed RNA polymerase subunit beta (1270 aa).

It belongs to the RNA polymerase beta chain family. As to quaternary structure, the RNAP catalytic core consists of 2 alpha, 1 beta, 1 beta' and 1 omega subunit. When a sigma factor is associated with the core the holoenzyme is formed, which can initiate transcription.

It catalyses the reaction RNA(n) + a ribonucleoside 5'-triphosphate = RNA(n+1) + diphosphate. In terms of biological role, DNA-dependent RNA polymerase catalyzes the transcription of DNA into RNA using the four ribonucleoside triphosphates as substrates. This chain is DNA-directed RNA polymerase subunit beta, found in Bacteroides fragilis (strain ATCC 25285 / DSM 2151 / CCUG 4856 / JCM 11019 / LMG 10263 / NCTC 9343 / Onslow / VPI 2553 / EN-2).